Consider the following 491-residue polypeptide: Acetyl-coenzyme A carboxylase carboxyl transferase subunit beta, chloroplastic (491 aa).

One can recognise a CoA carboxyltransferase N-terminal domain in the interval 229-491 (LWVQCENCYG…FQLHGFFPLT (263 aa)). Zn(2+) contacts are provided by Cys233, Cys236, Cys252, and Cys255. The segment at 233–255 (CENCYGLNYKQFFRSRLNICEHC) adopts a C4-type zinc-finger fold.

It belongs to the AccD/PCCB family. Acetyl-CoA carboxylase is a heterohexamer composed of biotin carboxyl carrier protein, biotin carboxylase and 2 subunits each of ACCase subunit alpha and ACCase plastid-coded subunit beta (accD). The cofactor is Zn(2+).

It localises to the plastid. It is found in the chloroplast stroma. It catalyses the reaction N(6)-carboxybiotinyl-L-lysyl-[protein] + acetyl-CoA = N(6)-biotinyl-L-lysyl-[protein] + malonyl-CoA. It participates in lipid metabolism; malonyl-CoA biosynthesis; malonyl-CoA from acetyl-CoA: step 1/1. Functionally, component of the acetyl coenzyme A carboxylase (ACC) complex. Biotin carboxylase (BC) catalyzes the carboxylation of biotin on its carrier protein (BCCP) and then the CO(2) group is transferred by the transcarboxylase to acetyl-CoA to form malonyl-CoA. The polypeptide is Acetyl-coenzyme A carboxylase carboxyl transferase subunit beta, chloroplastic (Lemna minor (Common duckweed)).